The following is a 436-amino-acid chain: Prenyltransferase nscD (436 aa).

The protein belongs to the tryptophan dimethylallyltransferase family.

The protein operates within secondary metabolite biosynthesis. In terms of biological role, prenyltransferase; part of the gene cluster that mediates the biosynthesis of neosartoricin B, a prenylated anthracenone that probably exhibits T-cell antiproliferative activity, suggestive of a physiological role as an immunosuppressive agent. The non-reducing polyketide synthase nscA probably synthesizes and cyclizes the decaketide backbone. The hydrolase nscB then mediates the product release through hydrolysis followed by spontaneous decarboxylation. The prenyltransferase nscD catalyzes the addition of the dimethylallyl group to the aromatic C5. The FAD-dependent monooxygenase nscC is then responsible for the stereospecific hydroxylation at C2. Neosartoricin B can be converted into two additional compounds neosartoricins C and D. Neosartoricin C is a spirocyclic compound that is cyclized through the attack of C3 hydroxyl on C14, followed by dehydration. On the other hand, neosartoricin D is a further cyclized compound in which attack of C2 on C14 in neosartoricin C results in the formation of the acetal-containing dioxabicyclo-octanone ring. Both of these compounds are novel and possibly represent related metabolites of the gene cluster. In Arthroderma gypseum (strain ATCC MYA-4604 / CBS 118893) (Microsporum gypseum), this protein is Prenyltransferase nscD.